The following is a 278-amino-acid chain: Sulfide dehydrogenase subunit beta (278 aa).

Positions Met-1 to Ile-4 are excised as a propeptide. The region spanning Met-1 to Ile-95 is the FAD-binding FR-type domain. 3 residues coordinate [2Fe-2S] cluster: Cys-222, Cys-225, and Cys-237.

Heterodimer of alpha and beta subunits. The cofactor is FAD. It depends on [2Fe-2S] cluster as a cofactor.

It localises to the cytoplasm. It catalyses the reaction n sulfur + hydrogen sulfide + NADP(+) = (n+1) sulfur + NADPH. It carries out the reaction 2 reduced [2Fe-2S]-[ferredoxin] + NADP(+) + H(+) = 2 oxidized [2Fe-2S]-[ferredoxin] + NADPH. A bifunctional enzyme that catalyzes the reduction of elemental sulfur or polysulfide to hydrogen sulfide with NADPH as electron donor. Also functions as a reduced ferredoxin:NADP oxidoreductase with a very high affinity for reduced ferredoxin. Exhibits a broad specificity for various physiological and non-physiological substrates with varied reduction potentials such as methyl viologen, benzyl viologen, FAD, FMN, methylene blue, 2,6-dichlorophenolindophenol (DCIP), cytochrome C and ferricyanide with highest preference for benzyl viologen. Does not reduce fumarate, succinate, nitrate, nitrite, sulfate, sulfite or protons. Does not possess any hydrogenase activity or NADPH-dependent glutamate synthase activity. The polypeptide is Sulfide dehydrogenase subunit beta (Pyrococcus furiosus (strain ATCC 43587 / DSM 3638 / JCM 8422 / Vc1)).